Reading from the N-terminus, the 272-residue chain is Thiazole synthase (272 aa).

K111 acts as the Schiff-base intermediate with DXP in catalysis. 1-deoxy-D-xylulose 5-phosphate-binding positions include G172, 198 to 199 (AG), and 220 to 221 (NS). Residues 249–272 (SGRLPRRDQASASSPTTGLVQSPQ) are disordered. The segment covering 258–272 (ASASSPTTGLVQSPQ) has biased composition (polar residues).

The protein belongs to the ThiG family. Homotetramer. Forms heterodimers with either ThiH or ThiS.

It localises to the cytoplasm. It catalyses the reaction [ThiS sulfur-carrier protein]-C-terminal-Gly-aminoethanethioate + 2-iminoacetate + 1-deoxy-D-xylulose 5-phosphate = [ThiS sulfur-carrier protein]-C-terminal Gly-Gly + 2-[(2R,5Z)-2-carboxy-4-methylthiazol-5(2H)-ylidene]ethyl phosphate + 2 H2O + H(+). It participates in cofactor biosynthesis; thiamine diphosphate biosynthesis. Its function is as follows. Catalyzes the rearrangement of 1-deoxy-D-xylulose 5-phosphate (DXP) to produce the thiazole phosphate moiety of thiamine. Sulfur is provided by the thiocarboxylate moiety of the carrier protein ThiS. In vitro, sulfur can be provided by H(2)S. This Synechococcus sp. (strain CC9605) protein is Thiazole synthase.